The following is a 184-amino-acid chain: Ribosome-recycling factor (184 aa).

It belongs to the RRF family.

The protein localises to the cytoplasm. Responsible for the release of ribosomes from messenger RNA at the termination of protein biosynthesis. May increase the efficiency of translation by recycling ribosomes from one round of translation to another. The polypeptide is Ribosome-recycling factor (Stenotrophomonas maltophilia (strain K279a)).